Here is a 119-residue protein sequence, read N- to C-terminus: Large ribosomal subunit protein bL20 (119 aa).

It belongs to the bacterial ribosomal protein bL20 family.

In terms of biological role, binds directly to 23S ribosomal RNA and is necessary for the in vitro assembly process of the 50S ribosomal subunit. It is not involved in the protein synthesizing functions of that subunit. This is Large ribosomal subunit protein bL20 from Bordetella bronchiseptica (strain ATCC BAA-588 / NCTC 13252 / RB50) (Alcaligenes bronchisepticus).